Reading from the N-terminus, the 271-residue chain is Phosphatidylinositol transfer protein beta isoform (271 aa).

Lys-215 is modified (N6-acetyllysine). The residue at position 262 (Ser-262) is a Phosphoserine.

It belongs to the PtdIns transfer protein family. PI transfer class I subfamily. Post-translationally, constitutive phosphorylation of Ser-262 has no effect on phospholipid transfer activity but is required for Golgi targeting. Expressed abundantly in brain, kidney, liver, and lung, but in a lesser amount in testis.

The protein localises to the golgi apparatus. It is found in the golgi apparatus membrane. It localises to the endoplasmic reticulum membrane. It carries out the reaction a 1,2-diacyl-sn-glycero-3-phosphocholine(in) = a 1,2-diacyl-sn-glycero-3-phosphocholine(out). It catalyses the reaction a 1,2-diacyl-sn-glycero-3-phospho-(1D-myo-inositol)(in) = a 1,2-diacyl-sn-glycero-3-phospho-(1D-myo-inositol)(out). The enzyme catalyses an N-(acyl)-sphingosylphosphocholine(in) = an N-(acyl)-sphingosylphosphocholine(out). Phosphatidylinositol transfer activity is inhibited by N-ethylmaleimide. Its function is as follows. Catalyzes the transfer of phosphatidylinositol between membranes. Also catalyzes the transfer of phosphatidylcholine and sphingomyelin between membranes. Required for COPI-mediated retrograde transport from the Golgi to the endoplasmic reticulum; phosphatidylinositol and phosphatidylcholine transfer activity is essential for this function. This Rattus norvegicus (Rat) protein is Phosphatidylinositol transfer protein beta isoform (Pitpnb).